The chain runs to 453 residues: Chromosomal replication initiator protein DnaA (453 aa).

The segment at 1–71 (MSEKEIWEKV…QAILFDVVGY (71 aa)) is domain I, interacts with DnaA modulators. A domain II region spans residues 71-114 (YEVKPHFITTEELANYSNNETATPKETTKPSTETTEDNHVLGRE). Residues 115–331 (QFNAHNTFDT…GALTRLLAYS (217 aa)) are domain III, AAA+ region. ATP is bound by residues G159, G161, K162, and T163. The tract at residues 332-453 (QLLGKPITTE…ENLEKEIRNV (122 aa)) is domain IV, binds dsDNA.

This sequence belongs to the DnaA family. As to quaternary structure, oligomerizes as a right-handed, spiral filament on DNA at oriC.

It localises to the cytoplasm. Functionally, plays an essential role in the initiation and regulation of chromosomal replication. ATP-DnaA binds to the origin of replication (oriC) to initiate formation of the DNA replication initiation complex once per cell cycle. Binds the DnaA box (a 9 base pair repeat at the origin) and separates the double-stranded (ds)DNA. Forms a right-handed helical filament on oriC DNA; dsDNA binds to the exterior of the filament while single-stranded (ss)DNA is stabiized in the filament's interior. The ATP-DnaA-oriC complex binds and stabilizes one strand of the AT-rich DNA unwinding element (DUE), permitting loading of DNA polymerase. After initiation quickly degrades to an ADP-DnaA complex that is not apt for DNA replication. Binds acidic phospholipids. The chain is Chromosomal replication initiator protein DnaA from Staphylococcus aureus (strain bovine RF122 / ET3-1).